We begin with the raw amino-acid sequence, 481 residues long: Drebrin-like protein (481 aa).

Residues 3–131 form the ADF-H domain; sequence SLDISDPDIT…DEKAITAALN (129 aa). A compositionally biased stretch (basic and acidic residues) spans 217 to 227; it reads YWKQQQAEKQK. The tract at residues 217 to 423 is disordered; that stretch reads YWKQQQAEKQ…PAEEQYDQSG (207 aa). Residues 228–237 show a composition bias toward low complexity; sequence QQQQQQQQQA. The span at 248 to 261 shows a compositional bias: polar residues; sequence TVGNKFQEQVSKPT. Residues 291-300 are compositionally biased toward pro residues; it reads PPAPSRPAAP. Positions 325 to 335 are enriched in acidic residues; it reads QYEEPQYEEEQ. A compositionally biased stretch (low complexity) spans 336-413; that stretch reads QQQYEEQPTE…YQEEQQQYEQ (78 aa). The 60-residue stretch at 422 to 481 folds into the SH3 domain; sequence SGYLQAKALYDYNGENDGDLSFREGDIITILDQSDPDGWWQGSLPTGEQGFFPSNFVQQL.

This sequence belongs to the ABP1 family.

Its subcellular location is the cytoplasm. The protein resides in the cytoskeleton. It localises to the cell projection. The protein localises to the pseudopodium. Actin-binding adapter protein. Binds to F-actin but is not involved in actin polymerization, capping or bundling. Does not bind G-actin. Controls pseudopodium number and motility in early stages of chemotactic aggregation. This chain is Drebrin-like protein (abpE-1), found in Dictyostelium discoideum (Social amoeba).